The sequence spans 591 residues: MALFLARHTLSGTGAGCHGRGPAPDVSEVDLTLQALGERGFSRLLDLGLACLDLSYVEMREFVVWGRPPASEAAVASTPGSLFRSHSSAYWLSEVERPGGLVRWARSQTSPSSLTLAPHLGPSLLSLSVVTGGGCGAVAFCNAFFLAYFLVVRSVFPAFSDRIAAWICDRSPFCENTRAVARGYRGLVKRFLAFVFERSSYDPPLLRQNSRPVERCFAIKNYVPGLDSQSCVTVPSFSRWAQSHASELDPREIRDRVTPATAPSFVADHASALLASLQKKASDTPCGNPIQWMWYRLLVNSCLRSAHCLLPIPAVSEGGRKTGGGVGEELVGAGGPCLSRDVFVAIVSRNVLSCLLNVPAAGPRAYKCFRSHASRPVSGPDYPPLAVFCMDCGYCLNFGKQTGVGGRLNSFRPTLQFYPRDQKEKHVLTCHASGRVYCSNCGSAAVGCQRLAEPPSARSGWRPRIRAVLPHNAAYELDRGSRLLDAIIPCLGPDRTCMRPVVLRGVTVRQLLYLTLRTEARAVCSICQQRQAPEDARDEPHLFSSCLEVELPPGERCAGCRLYQTRYGTPAAQAHPPGEAGGGFSRQSPAS.

Residues 571–591 are disordered; the sequence is AAQAHPPGEAGGGFSRQSPAS.

It belongs to the Epstein-Barr virus BFRF2 family. Part of a trimeric complex composed of BGLF3, BFRF2 and BVLF1.

Its function is as follows. Part of the viral pre-initiation complex (vPIC) that is responsible for the expression of vPIC-dependent late genes. vPIC is composed of at least BcRF1 that binds the viral TATT box, BDLF3.5, BDLF4, BFRF2, BGLF3, BGLF4 and BVLF1. This chain is Late gene expression regulator BFRF2, found in Homo sapiens (Human).